The chain runs to 352 residues: Putative squamosa promoter-binding-like protein 19 (352 aa).

A disordered region spans residues 68-88 (AAAPATRRARGGSGGGGGGGG). A compositionally biased stretch (gly residues) spans 78 to 88 (GGSGGGGGGGG). The SBP-type zinc finger occupies 90 to 167 (AEACSVDGCR…DGHNRRRRKP (78 aa)). Zn(2+) contacts are provided by C93, C98, C115, H118, C134, C137, H141, and C153. Residues 150–166 (KKSCRKRLDGHNRRRRK) carry the Bipartite nuclear localization signal motif. The disordered stretch occupies residues 152–174 (SCRKRLDGHNRRRRKPQHDALNP).

The protein localises to the nucleus. Functionally, trans-acting factor that binds specifically to the consensus nucleotide sequence 5'-TNCGTACAA-3'. The polypeptide is Putative squamosa promoter-binding-like protein 19 (SPL19) (Oryza sativa subsp. japonica (Rice)).